The following is a 574-amino-acid chain: Thiol:disulfide interchange protein DsbD (574 aa).

The N-terminal stretch at 1–19 (MAHRILTLILLFCSAHASA) is a signal peptide. Residues C122 and C128 are joined by a disulfide bond. A disordered region spans residues 147–169 (VKANAATPSAATGEQTRVNSDSP). Residues 152–169 (ATPSAATGEQTRVNSDSP) are compositionally biased toward polar residues. A run of 7 helical transmembrane segments spans residues 173-193 (LPFSAFWALLIGIGVAFTPCV), 218-238 (LLAFIYVQGMALTYTALGLVV), 253-273 (WVLVTLSAVFVLLALSMFGLF), 306-326 (IAGLICSPCTTAPLSAILLYI), 333-353 (WLGGGTLYLYALGMGLPLILV), 367-387 (WMEQVKTAFGFVILALPVFLL), and 399-419 (LWSVLGVAFFGWAFVTSLNAT). C192 and C314 form a disulfide bridge. Positions 430 to 574 (LLGAAMICAR…FATHLHNRLR (145 aa)) constitute a Thioredoxin domain. Residues C489 and C492 are joined by a disulfide bond.

It belongs to the thioredoxin family. DsbD subfamily.

The protein resides in the cell inner membrane. The enzyme catalyses [protein]-dithiol + NAD(+) = [protein]-disulfide + NADH + H(+). It carries out the reaction [protein]-dithiol + NADP(+) = [protein]-disulfide + NADPH + H(+). Its function is as follows. Required to facilitate the formation of correct disulfide bonds in some periplasmic proteins and for the assembly of the periplasmic c-type cytochromes. Acts by transferring electrons from cytoplasmic thioredoxin to the periplasm. This transfer involves a cascade of disulfide bond formation and reduction steps. The polypeptide is Thiol:disulfide interchange protein DsbD (Cronobacter sakazakii (strain ATCC BAA-894) (Enterobacter sakazakii)).